A 110-amino-acid polypeptide reads, in one-letter code: uncharacterized protein (110 aa).

This is an uncharacterized protein from Acidianus convivator (ABV).